We begin with the raw amino-acid sequence, 147 residues long: Histone H2B (147 aa).

A compositionally biased stretch (basic and acidic residues) spans 1 to 31; that stretch reads MAPKAEKKPAEKKPAEEKKAVAEKAPAEKKP. Positions 1 to 55 are disordered; the sequence is MAPKAEKKPAEKKPAEEKKAVAEKAPAEKKPKAGKKLPKEGGAAAGDKKKKRVKK. Lys-7, Lys-35, and Lys-36 each carry N6-acetyllysine. Residue Lys-143 forms a Glycyl lysine isopeptide (Lys-Gly) (interchain with G-Cter in ubiquitin) linkage.

This sequence belongs to the histone H2B family. The nucleosome is a histone octamer containing two molecules each of H2A, H2B, H3 and H4 assembled in one H3-H4 heterotetramer and two H2A-H2B heterodimers. The octamer wraps approximately 147 bp of DNA. Can be acetylated to form H2BK6ac, H2BK33ac and H2BK34ac. In terms of processing, monoubiquitinated to form H2BK143ub1; may give a specific tag for epigenetic transcriptional activation.

Its subcellular location is the nucleus. The protein localises to the chromosome. In terms of biological role, core component of nucleosome. Nucleosomes wrap and compact DNA into chromatin, limiting DNA accessibility to the cellular machineries which require DNA as a template. Histones thereby play a central role in transcription regulation, DNA repair, DNA replication and chromosomal stability. DNA accessibility is regulated via a complex set of post-translational modifications of histones, also called histone code, and nucleosome remodeling. The protein is Histone H2B (HIS2B) of Gossypium hirsutum (Upland cotton).